A 1149-amino-acid chain; its full sequence is Structural maintenance of chromosomes protein 6 homolog smc-6 (1149 aa).

Residue 77–84 (GPNGSGKS) coordinates ATP. Positions 309–460 (LQDETKKEYA…EEEKYTIQRD (152 aa)) form a coiled coil. The tract at residues 461-687 (INQLRRKIEQ…DVDEGALARL (227 aa)) is flexible hinge. Residues 714–920 (YNERDQTKAA…AVDRATVGCD (207 aa)) adopt a coiled-coil conformation. Disordered stretches follow at residues 875–900 (NDKK…STTE) and 1026–1060 (EVDE…VRDL). The span at 1026 to 1038 (EVDEHSYDDDSDD) shows a compositional bias: acidic residues. Residues 1042 to 1058 (PRRKKSKKSGQKKKRVR) show a composition bias toward basic residues.

This sequence belongs to the SMC family. SMC6 subfamily. In terms of assembly, interacts with smc-5. Expressed in the germline (at protein level).

Its subcellular location is the nucleus. The protein localises to the chromosome. In terms of biological role, core component of the smc-5/smc-6 complex. Involved in DNA double-strand break repair by promoting sister-chromatid homologous recombination during meiosis. Also plays a role in the DNA damage repair of ultraviolet (UV) radiation-induced DNA lesions. Promotes efficient DNA replication. The protein is Structural maintenance of chromosomes protein 6 homolog smc-6 of Caenorhabditis elegans.